We begin with the raw amino-acid sequence, 1481 residues long: Neuropathy target esterase sws (1481 aa).

Residues Met1–Ser34 are Lumenal-facing. A helical membrane pass occupies residues Leu35–Phe55. Topologically, residues Lys56–Asn1481 are cytoplasmic. A nucleoside 3',5'-cyclic phosphate is bound at residue Ile175 to Arg302. The tract at residues His336 to Gly420 is disordered. Low complexity-rich tracts occupy residues Ser339 to Gln379 and Ser401 to Asn412. Ser448 is subject to Phosphoserine. A nucleoside 3',5'-cyclic phosphate contacts are provided by residues Glu492 to Arg624 and Ile613 to Arg740. The 167-residue stretch at Leu967–Arg1133 folds into the PNPLA domain. Positions Gly971–Gly976 match the GXGXXG motif. The GXSXG motif lies at Gly998 to Gly1002. The Nucleophile role is filled by Ser1000. Asp1120 (proton acceptor) is an active-site residue. The DGA/G motif lies at Asp1120 to Gly1122. The residue at position 1214 (Ser1214) is a Phosphoserine. A disordered region spans residues Leu1366 to Asn1481. 2 stretches are compositionally biased toward basic and acidic residues: residues Ile1379–Ala1390 and Lys1400–Asp1410. The span at Thr1445 to Thr1457 shows a compositional bias: low complexity.

Belongs to the NTE family. Interacts with Pka-C3; interaction inhibits the catalytic function of Pka-C3 and the esterase activity of sws.

The protein localises to the endoplasmic reticulum membrane. It carries out the reaction a 1-acyl-sn-glycero-3-phosphocholine + H2O = sn-glycerol 3-phosphocholine + a fatty acid + H(+). In terms of biological role, phospholipase B that deacylates intracellular phosphatidylcholine (PtdCho), generating glycerophosphocholine (GroPtdCho). This deacylation occurs at both sn-2 and sn-1 positions of PtdCho. Its specific chemical modification by certain organophosphorus (OP) compounds leads to distal axonopathy. Plays a role in the signaling mechanism between neurons and glia that regulates glia wrapping during development of the adult brain. Essential for membrane lipid homeostasis and cell survival in both neurons and glia of the adult brain. The chain is Neuropathy target esterase sws from Drosophila willistoni (Fruit fly).